Here is a 215-residue protein sequence, read N- to C-terminus: Thiamine-phosphate synthase (215 aa).

Residues 43–47 (QLRDK) and asparagine 75 each bind 4-amino-2-methyl-5-(diphosphooxymethyl)pyrimidine. 2 residues coordinate Mg(2+): aspartate 76 and aspartate 95. Serine 114 provides a ligand contact to 4-amino-2-methyl-5-(diphosphooxymethyl)pyrimidine. Position 141–143 (141–143 (TPT)) interacts with 2-[(2R,5Z)-2-carboxy-4-methylthiazol-5(2H)-ylidene]ethyl phosphate. A 4-amino-2-methyl-5-(diphosphooxymethyl)pyrimidine-binding site is contributed by lysine 144. Glycine 172 lines the 2-[(2R,5Z)-2-carboxy-4-methylthiazol-5(2H)-ylidene]ethyl phosphate pocket.

Belongs to the thiamine-phosphate synthase family. Mg(2+) serves as cofactor.

It carries out the reaction 2-[(2R,5Z)-2-carboxy-4-methylthiazol-5(2H)-ylidene]ethyl phosphate + 4-amino-2-methyl-5-(diphosphooxymethyl)pyrimidine + 2 H(+) = thiamine phosphate + CO2 + diphosphate. It catalyses the reaction 2-(2-carboxy-4-methylthiazol-5-yl)ethyl phosphate + 4-amino-2-methyl-5-(diphosphooxymethyl)pyrimidine + 2 H(+) = thiamine phosphate + CO2 + diphosphate. The enzyme catalyses 4-methyl-5-(2-phosphooxyethyl)-thiazole + 4-amino-2-methyl-5-(diphosphooxymethyl)pyrimidine + H(+) = thiamine phosphate + diphosphate. It functions in the pathway cofactor biosynthesis; thiamine diphosphate biosynthesis; thiamine phosphate from 4-amino-2-methyl-5-diphosphomethylpyrimidine and 4-methyl-5-(2-phosphoethyl)-thiazole: step 1/1. Condenses 4-methyl-5-(beta-hydroxyethyl)thiazole monophosphate (THZ-P) and 2-methyl-4-amino-5-hydroxymethyl pyrimidine pyrophosphate (HMP-PP) to form thiamine monophosphate (TMP). This Streptomyces avermitilis (strain ATCC 31267 / DSM 46492 / JCM 5070 / NBRC 14893 / NCIMB 12804 / NRRL 8165 / MA-4680) protein is Thiamine-phosphate synthase.